The primary structure comprises 252 residues: Type III pantothenate kinase (252 aa).

6–13 (DVGNTHTT) lines the ATP pocket. Residue 104–107 (GADR) participates in substrate binding. Catalysis depends on aspartate 106, which acts as the Proton acceptor. Position 126 (aspartate 126) interacts with K(+). Threonine 129 provides a ligand contact to ATP. Threonine 180 is a binding site for substrate.

Belongs to the type III pantothenate kinase family. Homodimer. The cofactor is NH4(+). K(+) is required as a cofactor.

The protein resides in the cytoplasm. It catalyses the reaction (R)-pantothenate + ATP = (R)-4'-phosphopantothenate + ADP + H(+). It functions in the pathway cofactor biosynthesis; coenzyme A biosynthesis; CoA from (R)-pantothenate: step 1/5. In terms of biological role, catalyzes the phosphorylation of pantothenate (Pan), the first step in CoA biosynthesis. The sequence is that of Type III pantothenate kinase from Fervidobacterium nodosum (strain ATCC 35602 / DSM 5306 / Rt17-B1).